Reading from the N-terminus, the 835-residue chain is Invasin (835 aa).

Residues 451-541 (VITSEVTDDG…QQATVDVRFA (91 aa)) enclose the Big-1 domain.

It belongs to the intimin/invasin family.

The protein resides in the cell outer membrane. Invasin is a protein that allows enteric bacteria to penetrate cultured mammalian cells. The entry of invasin in the cell is mediated by binding several beta-1 chain integrins. The sequence is that of Invasin from Yersinia enterocolitica.